We begin with the raw amino-acid sequence, 290 residues long: 4-hydroxy-tetrahydrodipicolinate synthase (290 aa).

Threonine 44 provides a ligand contact to pyruvate. Tyrosine 132 functions as the Proton donor/acceptor in the catalytic mechanism. Lysine 160 functions as the Schiff-base intermediate with substrate in the catalytic mechanism. Isoleucine 202 serves as a coordination point for pyruvate.

Belongs to the DapA family. In terms of assembly, homotetramer; dimer of dimers.

It localises to the cytoplasm. The enzyme catalyses L-aspartate 4-semialdehyde + pyruvate = (2S,4S)-4-hydroxy-2,3,4,5-tetrahydrodipicolinate + H2O + H(+). It functions in the pathway amino-acid biosynthesis; L-lysine biosynthesis via DAP pathway; (S)-tetrahydrodipicolinate from L-aspartate: step 3/4. Catalyzes the condensation of (S)-aspartate-beta-semialdehyde [(S)-ASA] and pyruvate to 4-hydroxy-tetrahydrodipicolinate (HTPA). The protein is 4-hydroxy-tetrahydrodipicolinate synthase of Pelobacter propionicus (strain DSM 2379 / NBRC 103807 / OttBd1).